A 163-amino-acid chain; its full sequence is Large ribosomal subunit protein uL10 (163 aa).

Belongs to the universal ribosomal protein uL10 family. Part of the ribosomal stalk of the 50S ribosomal subunit. The N-terminus interacts with L11 and the large rRNA to form the base of the stalk. The C-terminus forms an elongated spine to which L12 dimers bind in a sequential fashion forming a multimeric L10(L12)X complex.

Forms part of the ribosomal stalk, playing a central role in the interaction of the ribosome with GTP-bound translation factors. The polypeptide is Large ribosomal subunit protein uL10 (Histophilus somni (strain 129Pt) (Haemophilus somnus)).